Here is a 282-residue protein sequence, read N- to C-terminus: Bifunctional protein FolD (282 aa).

NADP(+) contacts are provided by residues 166–168 (GRS) and serine 191.

Belongs to the tetrahydrofolate dehydrogenase/cyclohydrolase family. Homodimer.

The catalysed reaction is (6R)-5,10-methylene-5,6,7,8-tetrahydrofolate + NADP(+) = (6R)-5,10-methenyltetrahydrofolate + NADPH. The enzyme catalyses (6R)-5,10-methenyltetrahydrofolate + H2O = (6R)-10-formyltetrahydrofolate + H(+). The protein operates within one-carbon metabolism; tetrahydrofolate interconversion. Catalyzes the oxidation of 5,10-methylenetetrahydrofolate to 5,10-methenyltetrahydrofolate and then the hydrolysis of 5,10-methenyltetrahydrofolate to 10-formyltetrahydrofolate. The polypeptide is Bifunctional protein FolD (Acidovorax sp. (strain JS42)).